A 993-amino-acid polypeptide reads, in one-letter code: MASAAVESFVTKQLDLLELERDAEVEERRSWQENISLKELQSRGVCLLKLQVSSQRTGLYGRLLVTFEPRRYGSAAALPSNSFTSGDIVGLYDAANEGSQLATGILTRVTQKSVTVAFDESHDFQLSLDRENSYRLLKLANDVTYRRLKKALIALKKYHSGPASSLIEVLFGRSAPSPASEIHPLTFFNTCLDTSQKEAVLFALSQKELAIIHGPPGTGKTTTVVEIILQAVKQGLKVLCCAPSNIAVDNLVERLALCKQRILRLGHPARLLESIQQHSLDAVLARSDSAQIVADIRKDIDQVFVKNKKTQDKREKSNFRNEIKLLRKELKEREEAAMLESLTSANVVLATNTGASADGPLKLLPESYFDVVVIDECAQALEASCWIPLLKARKCILAGDHKQLPPTTVSHKAALAGLSLSLMERLAEEYGARVVRTLTVQYRMHQAIMRWASDTMYLGQLTAHSSVARHLLRDLPGVAATEETGVPLLLVDTAGCGLFELEEEDEQSKGNPGEVRLVSLHIQALVDAGVPARDIAVVSPYNLQVDLLRQSLVHRHPELEIKSVDGFQGREKEAVILSFVRSNRKGEVGFLAEDRRINVAVTRARRHVAVICDSRTVNNHAFLKTLVEYFTQHGEVRTAFEYLDDIVPENYSHENSQGSSHAATKPQGPATSTRTGSQRQEGGQEAAAPARQGRKKPAGKSLASEAPSQPSLNGGSPEGVESQDGVDHFRAMIVEFMASKKMQLEFPPSLNSHDRLRVHQIAEEHGLRHDSSGEGKRRFITVSKRAPRPRAALGPPAGTGGPAPLQPVPPTPAQTEQPPREQRGPDQPDLRTLHLERLQRVRSAQGQPASKEQQASGQQKLPEKKKKKAKGHPATDLPTEEDFEALVSAAVKADNTCGFAKCTAGVTTLGQFCQLCSRRYCLSHHLPEIHGCGERARAHARQRISREGVLYAGSGTKNGSLDPAKRAQLQRRLDKKLSELSNQRTSRRKERGT.

The residue at position 2 (Ala2) is an N-acetylalanine. ATP contacts are provided by residues Gly214 to Thr221, Gln403, Tyr442, and Glu571. The interval Thr638–Arg785 is SS DNA-binding. Disordered regions lie at residues Tyr651–Gln723, Val782–Pro828, and Val841–Thr879. Composition is skewed to polar residues over residues His653 to Ala662 and Pro669 to Glu681. One can recognise an R3H domain in the interval Gln723–Ala786. The span at Pro818–Pro828 shows a compositional bias: basic and acidic residues. The span at Arg842–Gln859 shows a compositional bias: polar residues. Positions Lys864–Lys868 match the Nuclear localization signal motif. The segment at Val891–Ala940 adopts an AN1-type zinc-finger fold. Zn(2+) is bound by residues Cys897, Cys902, Cys913, Cys916, Cys921, His924, His930, and Cys932. A disordered region spans residues Arg971–Thr993.

The protein belongs to the DNA2/NAM7 helicase family. Homooligomer. Interacts with RUVBL1. Interacts with RUVBL2. Interacts with GTF3C1. Interacts with ABT1. Interacts with ribosomes. Expressed in all tissues examined. Expressed in the developing and adult human brain, with highest expression in the cerebellum. Moderately expressed in fibroblasts.

The protein localises to the nucleus. It is found in the cytoplasm. The protein resides in the cell projection. Its subcellular location is the axon. It carries out the reaction ATP + H2O = ADP + phosphate + H(+). Its function is as follows. 5' to 3' helicase that unwinds RNA and DNA duplexes in an ATP-dependent reaction. Specific to 5'-phosphorylated single-stranded guanine-rich sequences. May play a role in RNA metabolism, ribosome biogenesis or initiation of translation. May play a role in regulation of transcription. Interacts with tRNA-Tyr. The sequence is that of DNA-binding protein SMUBP-2 (IGHMBP2) from Homo sapiens (Human).